Consider the following 221-residue polypeptide: Small ribosomal subunit protein eS1 (221 aa).

This sequence belongs to the eukaryotic ribosomal protein eS1 family.

This chain is Small ribosomal subunit protein eS1, found in Pyrobaculum aerophilum (strain ATCC 51768 / DSM 7523 / JCM 9630 / CIP 104966 / NBRC 100827 / IM2).